A 310-amino-acid polypeptide reads, in one-letter code: 4-hydroxyproline epimerase (310 aa).

Cys-88 serves as the catalytic Proton acceptor. Residues Gly-89–His-90, His-208, and Asp-232 each bind substrate. Residue Cys-236 is the Proton donor of the active site. Gly-237–Thr-238 contributes to the substrate binding site.

It belongs to the proline racemase family. Homodimer.

It catalyses the reaction trans-4-hydroxy-L-proline = cis-4-hydroxy-D-proline. Inhibited by iodoacetate, iodoacetamide and by high amounts (10 mM) of pyrrole-2-carboxylic acid (PYC). Not inhibited by PYC at 1 mM. Functionally, allows intracellular utilization of 4-hydroxyproline, one of the major constituents of host collagen, by converting 4-hydroxy-L-proline to 4-hydroxy-D-proline, which can be further metabolized by intracellular 4-hydroxy-D-proline oxidases. The sequence is that of 4-hydroxyproline epimerase from Burkholderia pseudomallei (strain K96243).